We begin with the raw amino-acid sequence, 338 residues long: Fructose-1,6-bisphosphatase class 1 (338 aa).

Mg(2+)-binding residues include E91, D113, L115, and D116. Residues D116–S119, N208, and K274 contribute to the substrate site. E280 is a Mg(2+) binding site.

This sequence belongs to the FBPase class 1 family. Homotetramer. Mg(2+) is required as a cofactor.

The protein localises to the cytoplasm. It carries out the reaction beta-D-fructose 1,6-bisphosphate + H2O = beta-D-fructose 6-phosphate + phosphate. Its pathway is carbohydrate biosynthesis; gluconeogenesis. This is Fructose-1,6-bisphosphatase class 1 from Ralstonia nicotianae (strain ATCC BAA-1114 / GMI1000) (Ralstonia solanacearum).